Here is a 178-residue protein sequence, read N- to C-terminus: Large ribosomal subunit protein uL6 (178 aa).

It belongs to the universal ribosomal protein uL6 family. Part of the 50S ribosomal subunit.

In terms of biological role, this protein binds to the 23S rRNA, and is important in its secondary structure. It is located near the subunit interface in the base of the L7/L12 stalk, and near the tRNA binding site of the peptidyltransferase center. In Francisella tularensis subsp. holarctica (strain FTNF002-00 / FTA), this protein is Large ribosomal subunit protein uL6.